We begin with the raw amino-acid sequence, 1441 residues long: Gag-Pol polyprotein (1441 aa).

Gly-2 carries N-myristoyl glycine; by host lipidation. Positions 7 to 31 are interaction with Gp41; sequence VLSGGELDRWENIRLRPGGKKKYKL. Residues 8 to 43 form an interaction with host CALM1 region; sequence LSGGELDRWENIRLRPGGKKKYKLKHVVWASRELER. The interaction with host AP3D1 stretch occupies residues 12 to 19; sequence ELDRWENI. Positions 14–33 are interaction with membrane phosphatidylinositol 4,5-bisphosphate and RNA; that stretch reads DRWENIRLRPGGKKKYKLKH. The Nuclear export signal motif lies at 16–22; it reads WENIRLR. A Nuclear localization signal motif is present at residues 26–32; that stretch reads KKKYKLK. The interaction with membrane phosphatidylinositol 4,5-bisphosphate stretch occupies residues 73–77; it reads EELKS. The disordered stretch occupies residues 106-131; that stretch reads EEQNKSKKKAQQAAADTGNRGNSSQV. Tyr-135 carries the post-translational modification Phosphotyrosine; by host. The tract at residues 192–230 is interaction with human PPIA/CYPA and NUP153; that stretch reads NTVGGHQAAMQMLKETINEEAAEWDRLHPVHAGPITPGQ. Residues 280–366 are dimerization/Multimerization of capsid protein p24; that stretch reads YSPSSILDIR…GGPGHKARVL (87 aa). 2 consecutive CCHC-type zinc fingers follow at residues 393 to 410 and 414 to 431; these read IKCF…NCRA and RGCW…DCTE. The segment covering 451–460 has biased composition (polar residues); the sequence is SSEQNRANSP. The disordered stretch occupies residues 451 to 489; the sequence is SSEQNRANSPTRRELQVWGRDNNSLSEAGEEAGDDRQGP. Residues 495–499 form a dimerization of protease region; the sequence is PQITL. One can recognise a Peptidase A2 domain in the interval 514 to 583; sequence KEALLDTGAD…TPVNIIGRNL (70 aa). Asp-519 functions as the For protease activity; shared with dimeric partner in the catalytic mechanism. Dimerization of protease regions lie at residues 543–549 and 582–594; these read GIGGFIK and NLLT…LNFP. Residues 637–827 form the Reverse transcriptase domain; it reads EGKISKIGPE…PPFLWMGYEL (191 aa). Positions 703, 778, and 779 each coordinate Mg(2+). Residues 820-828 form an RT 'primer grip' region; that stretch reads FLWMGYELH. A Tryptophan repeat motif motif is present at residues 991–1007; the sequence is WETWWTEYTXATWIPEW. The RNase H type-1 domain maps to 1027-1150; it reads IVGAETFYVD…VDKLVSAGIR (124 aa). Residues Asp-1036, Glu-1071, Asp-1091, and Asp-1142 each contribute to the Mg(2+) site. The segment at 1156–1197 adopts an Integrase-type zinc-finger fold; that stretch reads DGIDKAQEDHEKYHSNWRAMASDFNLPPIVAKEIVASCDKCQ. Zn(2+) contacts are provided by His-1165, His-1169, Cys-1193, and Cys-1196. The Integrase catalytic domain maps to 1207–1357; sequence VDCSPGIWQL…SAGERIVGII (151 aa). Positions 1217, 1269, and 1305 each coordinate Mg(2+). Residues 1376-1423 constitute a DNA-binding region (integrase-type); sequence FRVYYRDSRDPLWKGPAKLLWKGEGAVVIQDNNDIKVVPRRKAKVIRD.

As to quaternary structure, homotrimer; further assembles as hexamers of trimers. Interacts with gp41 (via C-terminus). Interacts with host CALM1; this interaction induces a conformational change in the Matrix protein, triggering exposure of the myristate group. Interacts with host AP3D1; this interaction allows the polyprotein trafficking to multivesicular bodies during virus assembly. Part of the pre-integration complex (PIC) which is composed of viral genome, matrix protein, Vpr and integrase. In terms of assembly, homodimer; the homodimer further multimerizes as homohexamers or homopentamers. Interacts with human PPIA/CYPA; This interaction stabilizes the capsid. Interacts with human NUP153. Interacts with host PDZD8; this interaction stabilizes the capsid. Interacts with monkey TRIM5; this interaction destabilizes the capsid. Homodimer, whose active site consists of two apposed aspartic acid residues. As to quaternary structure, heterodimer of p66 RT and p51 RT (RT p66/p51). Heterodimerization of RT is essential for DNA polymerase activity. The overall folding of the subdomains is similar in p66 RT and p51 RT but the spatial arrangements of the subdomains are dramatically different. In terms of assembly, homotetramer; may further associate as a homohexadecamer. Part of the pre-integration complex (PIC) which is composed of viral genome, matrix protein, Vpr and integrase. Interacts with human SMARCB1/INI1 and human PSIP1/LEDGF isoform 1. Interacts with human KPNA3; this interaction might play a role in nuclear import of the pre-integration complex. Interacts with human NUP153; this interaction might play a role in nuclear import of the pre-integration complex. It depends on Mg(2+) as a cofactor. In terms of processing, specific enzymatic cleavages by the viral protease yield mature proteins. The protease is released by autocatalytic cleavage. The polyprotein is cleaved during and after budding, this process is termed maturation. Proteolytic cleavage of p66 RT removes the RNase H domain to yield the p51 RT subunit. Nucleocapsid protein p7 might be further cleaved after virus entry. Post-translationally, tyrosine phosphorylated presumably in the virion by a host kinase. Phosphorylation is apparently not a major regulator of membrane association. Phosphorylated possibly by host MAPK1; this phosphorylation is necessary for Pin1-mediated virion uncoating. In terms of processing, methylated by host PRMT6, impairing its function by reducing RNA annealing and the initiation of reverse transcription.

Its subcellular location is the host cell membrane. It localises to the host endosome. The protein localises to the host multivesicular body. The protein resides in the virion membrane. It is found in the host nucleus. Its subcellular location is the host cytoplasm. It localises to the virion. It catalyses the reaction Specific for a P1 residue that is hydrophobic, and P1' variable, but often Pro.. The enzyme catalyses Endohydrolysis of RNA in RNA/DNA hybrids. Three different cleavage modes: 1. sequence-specific internal cleavage of RNA. Human immunodeficiency virus type 1 and Moloney murine leukemia virus enzymes prefer to cleave the RNA strand one nucleotide away from the RNA-DNA junction. 2. RNA 5'-end directed cleavage 13-19 nucleotides from the RNA end. 3. DNA 3'-end directed cleavage 15-20 nucleotides away from the primer terminus.. The catalysed reaction is 3'-end directed exonucleolytic cleavage of viral RNA-DNA hybrid.. It carries out the reaction DNA(n) + a 2'-deoxyribonucleoside 5'-triphosphate = DNA(n+1) + diphosphate. With respect to regulation, protease: The viral protease is inhibited by many synthetic protease inhibitors (PIs), such as amprenavir, atazanavir, indinavir, loprinavir, nelfinavir, ritonavir and saquinavir. Use of protease inhibitors in tritherapy regimens permit more ambitious therapeutic strategies. Reverse transcriptase/ribonuclease H: RT can be inhibited either by nucleoside RT inhibitors (NRTIs) or by non nucleoside RT inhibitors (NNRTIs). NRTIs act as chain terminators, whereas NNRTIs inhibit DNA polymerization by binding a small hydrophobic pocket near the RT active site and inducing an allosteric change in this region. Classical NRTIs are abacavir, adefovir (PMEA), didanosine (ddI), lamivudine (3TC), stavudine (d4T), tenofovir (PMPA), zalcitabine (ddC), and zidovudine (AZT). Classical NNRTIs are atevirdine (BHAP U-87201E), delavirdine, efavirenz (DMP-266), emivirine (I-EBU), and nevirapine (BI-RG-587). The tritherapies used as a basic effective treatment of AIDS associate two NRTIs and one NNRTI. Mediates, with Gag polyprotein, the essential events in virion assembly, including binding the plasma membrane, making the protein-protein interactions necessary to create spherical particles, recruiting the viral Env proteins, and packaging the genomic RNA via direct interactions with the RNA packaging sequence (Psi). Gag-Pol polyprotein may regulate its own translation, by the binding genomic RNA in the 5'-UTR. At low concentration, the polyprotein would promote translation, whereas at high concentration, the polyprotein would encapsidate genomic RNA and then shut off translation. In terms of biological role, targets the polyprotein to the plasma membrane via a multipartite membrane-binding signal, that includes its myristoylated N-terminus. Matrix protein is part of the pre-integration complex. Implicated in the release from host cell mediated by Vpu. Binds to RNA. Functionally, forms the conical core that encapsulates the genomic RNA-nucleocapsid complex in the virion. Most core are conical, with only 7% tubular. The core is constituted by capsid protein hexamer subunits. The core is disassembled soon after virion entry. Host restriction factors such as TRIM5-alpha or TRIMCyp bind retroviral capsids and cause premature capsid disassembly, leading to blocks in reverse transcription. Capsid restriction by TRIM5 is one of the factors which restricts HIV-1 to the human species. Host PIN1 apparently facilitates the virion uncoating. On the other hand, interactions with PDZD8 or CYPA stabilize the capsid. Its function is as follows. Encapsulates and protects viral dimeric unspliced genomic RNA (gRNA). Binds these RNAs through its zinc fingers. Acts as a nucleic acid chaperone which is involved in rearangement of nucleic acid secondary structure during gRNA retrotranscription. Also facilitates template switch leading to recombination. As part of the polyprotein, participates in gRNA dimerization, packaging, tRNA incorporation and virion assembly. Aspartyl protease that mediates proteolytic cleavages of Gag and Gag-Pol polyproteins during or shortly after the release of the virion from the plasma membrane. Cleavages take place as an ordered, step-wise cascade to yield mature proteins. This process is called maturation. Displays maximal activity during the budding process just prior to particle release from the cell. Also cleaves Nef and Vif, probably concomitantly with viral structural proteins on maturation of virus particles. Hydrolyzes host EIF4GI and PABP1 in order to shut off the capped cellular mRNA translation. The resulting inhibition of cellular protein synthesis serves to ensure maximal viral gene expression and to evade host immune response. Also mediates cleavage of host YTHDF3. Mediates cleavage of host CARD8, thereby activating the CARD8 inflammasome, leading to the clearance of latent HIV-1 in patient CD4(+) T-cells after viral reactivation; in contrast, HIV-1 can evade CARD8-sensing when its protease remains inactive in infected cells prior to viral budding. In terms of biological role, multifunctional enzyme that converts the viral RNA genome into dsDNA in the cytoplasm, shortly after virus entry into the cell. This enzyme displays a DNA polymerase activity that can copy either DNA or RNA templates, and a ribonuclease H (RNase H) activity that cleaves the RNA strand of RNA-DNA heteroduplexes in a partially processive 3' to 5' endonucleasic mode. Conversion of viral genomic RNA into dsDNA requires many steps. A tRNA(3)-Lys binds to the primer-binding site (PBS) situated at the 5'-end of the viral RNA. RT uses the 3' end of the tRNA primer to perform a short round of RNA-dependent minus-strand DNA synthesis. The reading proceeds through the U5 region and ends after the repeated (R) region which is present at both ends of viral RNA. The portion of the RNA-DNA heteroduplex is digested by the RNase H, resulting in a ssDNA product attached to the tRNA primer. This ssDNA/tRNA hybridizes with the identical R region situated at the 3' end of viral RNA. This template exchange, known as minus-strand DNA strong stop transfer, can be either intra- or intermolecular. RT uses the 3' end of this newly synthesized short ssDNA to perform the RNA-dependent minus-strand DNA synthesis of the whole template. RNase H digests the RNA template except for two polypurine tracts (PPTs) situated at the 5'-end and near the center of the genome. It is not clear if both polymerase and RNase H activities are simultaneous. RNase H probably can proceed both in a polymerase-dependent (RNA cut into small fragments by the same RT performing DNA synthesis) and a polymerase-independent mode (cleavage of remaining RNA fragments by free RTs). Secondly, RT performs DNA-directed plus-strand DNA synthesis using the PPTs that have not been removed by RNase H as primers. PPTs and tRNA primers are then removed by RNase H. The 3' and 5' ssDNA PBS regions hybridize to form a circular dsDNA intermediate. Strand displacement synthesis by RT to the PBS and PPT ends produces a blunt ended, linear dsDNA copy of the viral genome that includes long terminal repeats (LTRs) at both ends. Functionally, catalyzes viral DNA integration into the host chromosome, by performing a series of DNA cutting and joining reactions. This enzyme activity takes place after virion entry into a cell and reverse transcription of the RNA genome in dsDNA. The first step in the integration process is 3' processing. This step requires a complex comprising the viral genome, matrix protein, Vpr and integrase. This complex is called the pre-integration complex (PIC). The integrase protein removes 2 nucleotides from each 3' end of the viral DNA, leaving recessed CA OH's at the 3' ends. In the second step, the PIC enters cell nucleus. This process is mediated through integrase and Vpr proteins, and allows the virus to infect a non dividing cell. This ability to enter the nucleus is specific of lentiviruses, other retroviruses cannot and rely on cell division to access cell chromosomes. In the third step, termed strand transfer, the integrase protein joins the previously processed 3' ends to the 5' ends of strands of target cellular DNA at the site of integration. The 5'-ends are produced by integrase-catalyzed staggered cuts, 5 bp apart. A Y-shaped, gapped, recombination intermediate results, with the 5'-ends of the viral DNA strands and the 3' ends of target DNA strands remaining unjoined, flanking a gap of 5 bp. The last step is viral DNA integration into host chromosome. This involves host DNA repair synthesis in which the 5 bp gaps between the unjoined strands are filled in and then ligated. Since this process occurs at both cuts flanking the HIV genome, a 5 bp duplication of host DNA is produced at the ends of HIV-1 integration. Alternatively, Integrase may catalyze the excision of viral DNA just after strand transfer, this is termed disintegration. This is Gag-Pol polyprotein (gag-pol) from Human immunodeficiency virus type 1 group M subtype B (isolate MN) (HIV-1).